A 309-amino-acid chain; its full sequence is 1,2-phenylacetyl-CoA epoxidase, subunit A (309 aa).

Substrate is bound by residues R33, Q37, K103–S106, N132, M193, S202–N204, K214, and N218.

In terms of assembly, forms a stable heterotetramer (dimer of heterodimers) with PaaC. Requires Fe cation as cofactor.

It carries out the reaction phenylacetyl-CoA + NADPH + O2 + H(+) = 2-(1,2-epoxy-1,2-dihydrophenyl)acetyl-CoA + NADP(+) + H2O. It functions in the pathway aromatic compound metabolism; phenylacetate degradation. Component of 1,2-phenylacetyl-CoA epoxidase multicomponent enzyme system which catalyzes the reduction of phenylacetyl-CoA (PA-CoA) to form 1,2-epoxyphenylacetyl-CoA. The subunit A is the catalytic subunit involved in the incorporation of one atom of molecular oxygen into phenylacetyl-CoA. This Escherichia coli (strain K12) protein is 1,2-phenylacetyl-CoA epoxidase, subunit A (paaA).